Reading from the N-terminus, the 217-residue chain is 3,4-dihydroxy-2-butanone 4-phosphate synthase (217 aa).

D-ribulose 5-phosphate is bound by residues R37–E38, D42, R150–T154, and E174. E38 provides a ligand contact to Mg(2+). Residue H153 coordinates Mg(2+).

This sequence belongs to the DHBP synthase family. Homodimer. It depends on Mg(2+) as a cofactor. Requires Mn(2+) as cofactor.

The catalysed reaction is D-ribulose 5-phosphate = (2S)-2-hydroxy-3-oxobutyl phosphate + formate + H(+). The protein operates within cofactor biosynthesis; riboflavin biosynthesis; 2-hydroxy-3-oxobutyl phosphate from D-ribulose 5-phosphate: step 1/1. In terms of biological role, catalyzes the conversion of D-ribulose 5-phosphate to formate and 3,4-dihydroxy-2-butanone 4-phosphate. This is 3,4-dihydroxy-2-butanone 4-phosphate synthase from Shewanella loihica (strain ATCC BAA-1088 / PV-4).